Consider the following 871-residue polypeptide: Scavenger receptor class F member 2 (871 aa).

Residues 1–20 form a disordered region; that stretch reads MEGAGPRGAGPARRRGAGGP. The signal sequence occupies residues 1–43; it reads MEGAGPRGAGPARRRGAGGPPSPLLPSLLLLLLLWMLPDTVAP. Residues 44 to 441 lie on the Extracellular side of the membrane; the sequence is QELNPRGRNV…ACHLETNQRK (398 aa). EGF-like domains lie at 71–110, 122–153, 148–182, 183–212, 213–241, and 236–270; these read QGDE…ANCD, CKEL…ARCE, WGAR…AQCA, SACY…RSCN, NQCA…ARCD, and FGAR…KYCR. Cystine bridges form between C75–C86, C80–C98, C100–C109, C126–C134, C128–C141, C143–C152, C156–C163, C158–C170, C172–C181, C185–C193, C187–C200, C202–C211, C215–C222, C217–C229, C231–C240, C244–C251, C246–C258, and C260–C269. N-linked (GlcNAc...) asparagine glycosylation occurs at N83. Residues N310 and N365 are each glycosylated (N-linked (GlcNAc...) asparagine). An EGF-like 7 domain is found at 372-403; it reads CAFVCADCGSGHCDFQSGRCLCSPGVHGPHCN. Disulfide bonds link C376–C384, C379–C391, and C393–C402. Residue N403 is glycosylated (N-linked (GlcNAc...) asparagine). The helical transmembrane segment at 442–462 threads the bilayer; it reads GVMGAGALLVLLVCLLLSLLG. The Cytoplasmic segment spans residues 463 to 871; that stretch reads CCCACRGKDP…ELGRAGAPTL (409 aa). S551 carries the phosphoserine modification. The segment covering 570-579 has biased composition (basic and acidic residues); the sequence is EAPAESRDPE. The tract at residues 570–871 is disordered; that stretch reads EAPAESRDPE…ELGRAGAPTL (302 aa). S613 carries the post-translational modification Phosphoserine. The residue at position 628 (Y628) is a Phosphotyrosine. Basic and acidic residues predominate over residues 632–643; the sequence is ARREARPARARG. A phosphoserine mark is found at S651, S653, S710, S718, and S742. Residues 705-725 are compositionally biased toward basic and acidic residues; the sequence is TPSDKSAHTVEHGSPRTRDPT. Over residues 821–831 the composition is skewed to low complexity; sequence PPATETPGPEK. Basic residues predominate over residues 844–856; it reads KKTPIQKPPRKKS. Over residues 861-871 the composition is skewed to low complexity; that stretch reads GELGRAGAPTL.

As to quaternary structure, homophilic and heterophilic interaction via its extracellular domain. Interacts with SCARF1. The heterophilic interaction with SCARF1, which is stronger than the homophilic interaction with itself, is suppressed by the presence of SCARF1 ligand such as Ac-LDL. In terms of tissue distribution, predominantly expressed in endothelial cells. Expressed in heart, placenta, lung, kidney, spleen, small intestine and ovary.

The protein localises to the membrane. Probable adhesion protein, which mediates homophilic and heterophilic interactions. In contrast to SCARF1, it poorly mediates the binding and degradation of acetylated low density lipoprotein (Ac-LDL). The protein is Scavenger receptor class F member 2 (SCARF2) of Homo sapiens (Human).